A 403-amino-acid chain; its full sequence is Large ribosomal subunit protein uL3 (403 aa).

The segment at 1-37 (MSHRKFSAPRHGSLGFLPRKRSSRHRGKVKSFPKDDP) is disordered. Residue Ser13 is modified to Phosphoserine. Over residues 18–31 (PRKRSSRHRGKVKS) the composition is skewed to basic residues. A Glycyl lysine isopeptide (Lys-Gly) (interchain with G-Cter in SUMO2) cross-link involves residue Lys39. The residue at position 136 (Lys136) is an N6-acetyllysine. Glycyl lysine isopeptide (Lys-Gly) (interchain with G-Cter in SUMO2) cross-links involve residues Lys224 and Lys226. His245 is subject to Tele-methylhistidine. 2 positions are modified to N6-acetyllysine; alternate: Lys286 and Lys294. Lys286 participates in a covalent cross-link: Glycyl lysine isopeptide (Lys-Gly) (interchain with G-Cter in SUMO2); alternate. Lys294 participates in a covalent cross-link: Glycyl lysine isopeptide (Lys-Gly) (interchain with G-Cter in SUMO1); alternate. A Phosphoserine modification is found at Ser304. An N6-acetyllysine; alternate modification is found at Lys366. Lys366 is covalently cross-linked (Glycyl lysine isopeptide (Lys-Gly) (interchain with G-Cter in SUMO2); alternate). Lys373 is modified (N6-acetyllysine). Residues Lys386, Lys393, and Lys399 each participate in a glycyl lysine isopeptide (Lys-Gly) (interchain with G-Cter in SUMO2) cross-link.

Belongs to the universal ribosomal protein uL3 family. In terms of assembly, component of the large ribosomal subunit. Interacts with DHX33. Post-translationally, constitutively monomethylated at His-245 by METTL18. Methylation at His-245 regulates translation elongation by slowing ribosome traversal on tyrosine codons: slower elongation provides enough time for proper folding of synthesized proteins and prevents cellular aggregation of tyrosine-rich proteins. It is not required for incorporation of RPL3 into ribosomes.

Its subcellular location is the nucleus. The protein resides in the nucleolus. It localises to the cytoplasm. Component of the large ribosomal subunit. The ribosome is a large ribonucleoprotein complex responsible for the synthesis of proteins in the cell. The sequence is that of Large ribosomal subunit protein uL3 (RPL3) from Oryctolagus cuniculus (Rabbit).